The following is an 896-amino-acid chain: DNA mismatch repair protein MutS (896 aa).

An ATP-binding site is contributed by G638–S645.

This sequence belongs to the DNA mismatch repair MutS family.

This protein is involved in the repair of mismatches in DNA. It is possible that it carries out the mismatch recognition step. This protein has a weak ATPase activity. In Fusobacterium nucleatum subsp. nucleatum (strain ATCC 25586 / DSM 15643 / BCRC 10681 / CIP 101130 / JCM 8532 / KCTC 2640 / LMG 13131 / VPI 4355), this protein is DNA mismatch repair protein MutS.